We begin with the raw amino-acid sequence, 105 residues long: N(2)-fixation sustaining protein CowN (105 aa).

This sequence belongs to the CowN family.

Its function is as follows. Is required to sustain N(2)-dependent growth in the presence of low levels of carbon monoxide (CO). Probably acts by protecting the N(2) fixation ability of the nitrogenase complex, which is inactivated in the presence of CO. The protein is N(2)-fixation sustaining protein CowN of Tolumonas auensis (strain DSM 9187 / NBRC 110442 / TA 4).